We begin with the raw amino-acid sequence, 74 residues long: Serine rich endogenous peptide 16 (74 aa).

Residues 1 to 31 form the signal peptide; sequence MATKISHLVSLLLSLLLLLLFISSQVGFTEA. The segment at 29-74 is disordered; sequence TEAKRDERKKMSSPPIPSPLIPSPPIPPPPPRFYVPPSKSRRGKGP. Over residues 42-62 the composition is skewed to pro residues; that stretch reads PPIPSPLIPSPPIPPPPPRFY. The SCOOP motif motif lies at 60-74; the sequence is RFYVPPSKSRRGKGP. The SxS motif essential for MIK2 binding signature appears at 66–68; the sequence is SKS.

The protein belongs to the serine rich endogenous peptide (SCOOP) phytocytokine family. As to quaternary structure, interacts with MIK2 (via extracellular leucine-rich repeat domain); this interaction triggers the formation of complex between MIK2 and the BAK1/SERK3 and SERK4 coreceptors, and subsequent BAK1 activation by phosphorylation.

It is found in the cell membrane. The protein resides in the secreted. The protein localises to the extracellular space. It localises to the apoplast. Its function is as follows. Brassicaceae-specific phytocytokine (plant endogenous peptide released into the apoplast) perceived by MIK2 in a BAK1/SERK3 and SERK4 coreceptors-dependent manner, that modulates various physiological and antimicrobial processes including growth prevention and reactive oxygen species (ROS) response regulation. This chain is Serine rich endogenous peptide 16, found in Arabidopsis thaliana (Mouse-ear cress).